The following is a 36-amino-acid chain: Cytochrome b6-f complex subunit 7 (36 aa).

Residues 5–25 (IFFVAGLVFVLTLVGMAIGFG) form a helical membrane-spanning segment.

This sequence belongs to the PetM family. The 4 large subunits of the cytochrome b6-f complex are cytochrome b6, subunit IV (17 kDa polypeptide, PetD), cytochrome f and the Rieske protein, while the 4 small subunits are PetG, PetL, PetM and PetN. The complex functions as a dimer.

The protein localises to the cell inner membrane. Functionally, component of the cytochrome b6-f complex, which mediates electron transfer between photosystem II (PSII) and photosystem I (PSI), cyclic electron flow around PSI, and state transitions. This Gloeobacter violaceus (strain ATCC 29082 / PCC 7421) protein is Cytochrome b6-f complex subunit 7.